A 334-amino-acid chain; its full sequence is Glyceraldehyde-3-phosphate dehydrogenase (334 aa).

NAD(+) is bound by residues 10–11, Asp-33, Lys-77, and Thr-119; that span reads RI. D-glyceraldehyde 3-phosphate is bound by residues 149-151, Thr-180, 209-210, and Arg-232; these read SCT and TG. Cys-150 serves as the catalytic Nucleophile. Asn-314 contributes to the NAD(+) binding site.

It belongs to the glyceraldehyde-3-phosphate dehydrogenase family. Homotetramer.

The protein localises to the cytoplasm. The enzyme catalyses D-glyceraldehyde 3-phosphate + phosphate + NAD(+) = (2R)-3-phospho-glyceroyl phosphate + NADH + H(+). It functions in the pathway carbohydrate degradation; glycolysis; pyruvate from D-glyceraldehyde 3-phosphate: step 1/5. Catalyzes the oxidative phosphorylation of glyceraldehyde 3-phosphate (G3P) to 1,3-bisphosphoglycerate (BPG) using the cofactor NAD. The first reaction step involves the formation of a hemiacetal intermediate between G3P and a cysteine residue, and this hemiacetal intermediate is then oxidized to a thioester, with concomitant reduction of NAD to NADH. The reduced NADH is then exchanged with the second NAD, and the thioester is attacked by a nucleophilic inorganic phosphate to produce BPG. The protein is Glyceraldehyde-3-phosphate dehydrogenase (gap) of Chlamydia trachomatis serovar D (strain ATCC VR-885 / DSM 19411 / UW-3/Cx).